Consider the following 530-residue polypeptide: uncharacterized protein (530 aa).

The segment at 1–33 is disordered; that stretch reads MNNMSLKFPDIAINSSESSDDEDPSSKNEKKDG. Residues 24–33 are compositionally biased toward basic and acidic residues; the sequence is PSSKNEKKDG. 12 helical membrane-spanning segments follow: residues 83 to 103, 124 to 144, 147 to 167, 181 to 201, 211 to 231, 244 to 264, 323 to 343, 346 to 366, 375 to 395, 404 to 424, 436 to 456, and 471 to 491; these read FFILPIMCITYGMQYLDKTAV, WLSTIFYLGYMIAQYPAGYLL, FPISYFMFIAAFLWSACVLLM, FFSGVFEGCVNPAFVALTAMW, VVSWYAFNGVAIMVGALLGYG, YPFLVIGAISTAWSFVYLFFP, VTNAMSVFSALIIQGIGYSGI, TLLTLPSGAFAVAGMIASGIF, IPLAMTTSSLTIVGSIMIWKI, VVGVWLFCTISSGNAVILSLL, TVNATMFLFYSIGNIVSPQLF, and SLVSVCLFEGVLALLAFYYIF.

Belongs to the major facilitator superfamily. Allantoate permease family.

It localises to the endoplasmic reticulum. The protein resides in the membrane. This is an uncharacterized protein from Schizosaccharomyces pombe (strain 972 / ATCC 24843) (Fission yeast).